We begin with the raw amino-acid sequence, 261 residues long: Tryptophan synthase alpha chain (261 aa).

Residues Glu-49 and Asp-60 each act as proton acceptor in the active site.

It belongs to the TrpA family. In terms of assembly, tetramer of two alpha and two beta chains.

The enzyme catalyses (1S,2R)-1-C-(indol-3-yl)glycerol 3-phosphate + L-serine = D-glyceraldehyde 3-phosphate + L-tryptophan + H2O. Its pathway is amino-acid biosynthesis; L-tryptophan biosynthesis; L-tryptophan from chorismate: step 5/5. In terms of biological role, the alpha subunit is responsible for the aldol cleavage of indoleglycerol phosphate to indole and glyceraldehyde 3-phosphate. The chain is Tryptophan synthase alpha chain from Leifsonia xyli subsp. xyli (strain CTCB07).